The sequence spans 206 residues: Probable GTP-binding protein EngB (206 aa).

The 189-residue stretch at 7–195 folds into the EngB-type G domain; that stretch reads DCDEVVLLGR…EEALQAIFSD (189 aa). Residues 15–22, 41–45, 60–63, 140–143, and 175–177 contribute to the GTP site; these read GRSNVGKS, GVTRS, DLPG, NKID, and ISA. 2 residues coordinate Mg(2+): Ser22 and Thr43.

This sequence belongs to the TRAFAC class TrmE-Era-EngA-EngB-Septin-like GTPase superfamily. EngB GTPase family. Mg(2+) is required as a cofactor.

Necessary for normal cell division and for the maintenance of normal septation. The polypeptide is Probable GTP-binding protein EngB (Haloquadratum walsbyi (strain DSM 16790 / HBSQ001)).